The chain runs to 271 residues: Formamidopyrimidine-DNA glycosylase (271 aa).

The Schiff-base intermediate with DNA role is filled by P2. E3 acts as the Proton donor in catalysis. The active-site Proton donor; for beta-elimination activity is the K58. Residues H91, R110, and R152 each coordinate DNA. Residues 237-271 (RVYDRAGQPCRVCGEPIRCVRLGQRATYYCPRCQR) form an FPG-type zinc finger. R261 serves as the catalytic Proton donor; for delta-elimination activity.

It belongs to the FPG family. Monomer. Requires Zn(2+) as cofactor.

The enzyme catalyses Hydrolysis of DNA containing ring-opened 7-methylguanine residues, releasing 2,6-diamino-4-hydroxy-5-(N-methyl)formamidopyrimidine.. It carries out the reaction 2'-deoxyribonucleotide-(2'-deoxyribose 5'-phosphate)-2'-deoxyribonucleotide-DNA = a 3'-end 2'-deoxyribonucleotide-(2,3-dehydro-2,3-deoxyribose 5'-phosphate)-DNA + a 5'-end 5'-phospho-2'-deoxyribonucleoside-DNA + H(+). Functionally, involved in base excision repair of DNA damaged by oxidation or by mutagenic agents. Acts as a DNA glycosylase that recognizes and removes damaged bases. Has a preference for oxidized purines, such as 7,8-dihydro-8-oxoguanine (8-oxoG). Has AP (apurinic/apyrimidinic) lyase activity and introduces nicks in the DNA strand. Cleaves the DNA backbone by beta-delta elimination to generate a single-strand break at the site of the removed base with both 3'- and 5'-phosphates. This Methylococcus capsulatus (strain ATCC 33009 / NCIMB 11132 / Bath) protein is Formamidopyrimidine-DNA glycosylase.